Reading from the N-terminus, the 148-residue chain is UPF0208 membrane protein HD_1715 (148 aa).

Transmembrane regions (helical) follow at residues 41–60 (AARF…YFFT) and 66–88 (ILAN…LYWL).

Belongs to the UPF0208 family.

Its subcellular location is the cell inner membrane. The sequence is that of UPF0208 membrane protein HD_1715 from Haemophilus ducreyi (strain 35000HP / ATCC 700724).